The chain runs to 81 residues: Photosystem I iron-sulfur center (81 aa).

4Fe-4S ferredoxin-type domains follow at residues Met-1–Trp-31 and Ile-39–Tyr-68. Positions 11, 14, 17, 21, 48, 51, 54, and 58 each coordinate [4Fe-4S] cluster.

The cyanobacterial PSI reaction center is composed of one copy each of PsaA,B,C,D,E,F,I,J,K,L,M and X, and forms trimeric complexes. The cofactor is [4Fe-4S] cluster.

Its subcellular location is the cellular thylakoid membrane. It carries out the reaction reduced [plastocyanin] + hnu + oxidized [2Fe-2S]-[ferredoxin] = oxidized [plastocyanin] + reduced [2Fe-2S]-[ferredoxin]. In terms of biological role, apoprotein for the two 4Fe-4S centers FA and FB of photosystem I (PSI); essential for photochemical activity. FB is the terminal electron acceptor of PSI, donating electrons to ferredoxin. The C-terminus interacts with PsaA/B/D and helps assemble the protein into the PSI complex. Required for binding of PsaD and PsaE to PSI. PSI is a plastocyanin/cytochrome c6-ferredoxin oxidoreductase, converting photonic excitation into a charge separation, which transfers an electron from the donor P700 chlorophyll pair to the spectroscopically characterized acceptors A0, A1, FX, FA and FB in turn. The polypeptide is Photosystem I iron-sulfur center (Crocosphaera subtropica (strain ATCC 51142 / BH68) (Cyanothece sp. (strain ATCC 51142))).